An 84-amino-acid chain; its full sequence is Toxin BmKaTx13 (84 aa).

Residues 1 to 19 (MNYLVMISFALLLMKGVES) form the signal peptide. One can recognise an LCN-type CS-alpha/beta domain in the interval 21–83 (RDAYIAKPEN…VPIRVPGKCH (63 aa)). Disulfide bonds link Cys-31–Cys-82, Cys-35–Cys-55, Cys-41–Cys-65, and Cys-45–Cys-67. Position 84 (Arg-84) is a propeptide, removed by a carboxypeptidase.

This sequence belongs to the long (4 C-C) scorpion toxin superfamily. Sodium channel inhibitor family. Alpha subfamily. Expressed by the venom gland.

Its subcellular location is the secreted. Alpha toxins bind voltage-independently at site-3 of sodium channels (Nav) and inhibit the inactivation of the activated channels, thereby blocking neuronal transmission. This toxin is active against mammals. The chain is Toxin BmKaTx13 from Olivierus martensii (Manchurian scorpion).